A 730-amino-acid chain; its full sequence is MRHFWLLPAVAGIAGAQCPYLSGEMSFTQEQDNAGDTIEVTEQPIDNTLYVNDTGSYMTTDFGTPISDQTSLKAGPRGPTLLEDFIFRQKLQRFDHERVPERVVHARGAGAYGTFKSYADWSNVTAADFLSANDKETPMFCRFSTVVGFRGSVDTARDVHGHACRFYTDEGNYDIVGINFAPFFIQDAIQFPDLVHAIKPMPNNEIPQAATAHTSAWDFFSQQSTALHSALWLMSGNGIPRSFRHMNGYGVHSFRFVAANGTSKVVRTPWKSQQGVASLVWDEAQAAAGKNSDYHRQDLYNAMPNGHYPKYELQAQIMDEADMLRFGFDLLDPTKLVPEEVVPYTPLGMMELNANPTNYFAEVEQAGFQPGHVVPGIDFTDDPLLQGRLFSYLDTQLTRHGGPNFEQIPVNRPRKPVHNNNRDGFGQQQIPTNNWAYTPNSMSNGYPMQANQTQGHGFFTAPYRYASGHLVRQTSPTFNDHWSQPAMFWNSLIPAEQQMVVNAIVFENSKVNSPHVRKNVVNQLNMVNNNLAVRVARGLGLDEPSPNPTYYTSNKTSNVGTFGKPLLSIEGLQVGFLASNSHPESIKQGQAMAAQFSAAGVDLNIVTEAYADGVNTTYALSDAIDFDALIIADGVQSLFASPALANQMNSTATSTLYPPARPFQILVDSFRYGKPVAAVGSGSVALKNAGIDSSRSGVYTGSSETTEKIAKEVLEGLYTFRFVDRFALDE.

His-105 is a catalytic residue. Residue Tyr-392 participates in heme binding. Residues 403–433 (PNFEQIPVNRPRKPVHNNNRDGFGQQQIPTN) are disordered.

Belongs to the catalase family. Requires heme as cofactor.

It carries out the reaction 2 H2O2 = O2 + 2 H2O. Occurs in almost all aerobically respiring organisms and serves to protect cells from the toxic effects of hydrogen peroxide. This chain is Catalase R (catR), found in Aspergillus niger.